Consider the following 141-residue polypeptide: Protein stum homolog (141 aa).

A Phosphoserine modification is found at Ser26. Transmembrane regions (helical) follow at residues 51–71 and 87–107; these read FPVAVICLFLNTFVPGLGTFV and RHVCCVFWLNIAAALIQVLTA.

This sequence belongs to the SPEC3 family. Stum subfamily.

It is found in the membrane. The polypeptide is Protein stum homolog (Mus musculus (Mouse)).